Here is a 677-residue protein sequence, read N- to C-terminus: Methionine--tRNA ligase (677 aa).

The 'HIGH' region signature appears at 15-25 (PYANGSIHLGH). Residues C146, C149, C159, and C162 each coordinate Zn(2+). The short motif at 333 to 337 (KMSKS) is the 'KMSKS' region element. Residue K336 participates in ATP binding. The tRNA-binding domain occupies 575 to 677 (DFAKVDLRVA…DGAKPGQQVK (103 aa)).

It belongs to the class-I aminoacyl-tRNA synthetase family. MetG type 1 subfamily. As to quaternary structure, homodimer. Zn(2+) serves as cofactor.

Its subcellular location is the cytoplasm. It carries out the reaction tRNA(Met) + L-methionine + ATP = L-methionyl-tRNA(Met) + AMP + diphosphate. Functionally, is required not only for elongation of protein synthesis but also for the initiation of all mRNA translation through initiator tRNA(fMet) aminoacylation. This is Methionine--tRNA ligase from Salmonella arizonae (strain ATCC BAA-731 / CDC346-86 / RSK2980).